Reading from the N-terminus, the 815-residue chain is Patatin-like phospholipase domain-containing protein LELG_00944 (815 aa).

Polar residues predominate over residues 41–50 (VSTTAPTTPL). 2 disordered regions span residues 41–105 (VSTT…PQLK) and 140–166 (SENL…STSP). Residues 54-73 (LDMGDLSLLGGELGNGSDDV) show a composition bias toward low complexity. The span at 74–94 (VVGDDDDDDDDDDDDDDDDDD) shows a compositional bias: acidic residues. Residues 148–160 (KRTKFAKSSKSSK) show a composition bias toward basic residues. The helical transmembrane segment at 185–205 (WPILTFVVIWVTILGFLYLAV) threads the bilayer. The PNPLA domain occupies 360–552 (LCLSGGACFA…RTDIPIDALN (193 aa)). The short motif at 391 to 395 (GTSGG) is the GXSXG element. Ser-393 acts as the Nucleophile in catalysis. The active-site Proton acceptor is Asp-539. The interval 753-815 (GSTLRDDDAD…LTKERRHTVY (63 aa)) is disordered. Residues 759–799 (DDADADVDEDDNEDEDEEDEDENDYEEYDVEDLDDPYESDA) are compositionally biased toward acidic residues.

It belongs to the PLPL family.

Its subcellular location is the membrane. In terms of biological role, probable lipid hydrolase. This chain is Patatin-like phospholipase domain-containing protein LELG_00944, found in Lodderomyces elongisporus (strain ATCC 11503 / CBS 2605 / JCM 1781 / NBRC 1676 / NRRL YB-4239) (Yeast).